The sequence spans 221 residues: MRLILLGAPGAGKGTQAQFICEKFAIPQISTGDMLRAAVKAGTEFGVAAKKIMDAGGLVSDDIIIGLVKDRLTQPDCSKGYLFDGFPRTIPQAQAMKDAGVPIDYVLEIDVPFDAIIDRMGGRRVHPASGRTYHIKYNPPKVEGKDDVTGDALIQRDDDKEETVRKRLQVYDDQTRPLVEYYSSWAAQANAADKVKAPAYRKVSGTGSVEDITTSIFAQLK.

10–15 contacts ATP; it reads GAGKGT. Residues 30–59 form an NMP region; sequence STGDMLRAAVKAGTEFGVAAKKIMDAGGLV. AMP contacts are provided by residues threonine 31, arginine 36, 57 to 59, 85 to 88, and glutamine 92; these read GLV and GFPR. Positions 122 to 159 are LID; it reads GRRVHPASGRTYHIKYNPPKVEGKDDVTGDALIQRDDD. ATP contacts are provided by residues arginine 123 and 132–133; that span reads TY. Arginine 156 and arginine 167 together coordinate AMP. Residue glycine 207 participates in ATP binding.

This sequence belongs to the adenylate kinase family. As to quaternary structure, monomer.

It is found in the cytoplasm. It catalyses the reaction AMP + ATP = 2 ADP. It functions in the pathway purine metabolism; AMP biosynthesis via salvage pathway; AMP from ADP: step 1/1. Catalyzes the reversible transfer of the terminal phosphate group between ATP and AMP. Plays an important role in cellular energy homeostasis and in adenine nucleotide metabolism. The sequence is that of Adenylate kinase from Polynucleobacter asymbioticus (strain DSM 18221 / CIP 109841 / QLW-P1DMWA-1) (Polynucleobacter necessarius subsp. asymbioticus).